Consider the following 381-residue polypeptide: O-antigen chain mannosyltransferase B (381 aa).

This sequence belongs to the glycosyltransferase group 1 family. Glycosyltransferase 4 subfamily.

It carries out the reaction alpha-D-mannosyl-(1-&gt;3)-N-acetyl-alpha-D-glucosaminyl-di-trans,octa-cis-undecaprenyl diphosphate + 2 GDP-alpha-D-mannose = alpha-D-mannosyl-(1-&gt;3)-alpha-D-mannosyl-(1-&gt;3)-alpha-D-mannosyl-(1-&gt;3)-N-acetyl-alpha-D-glucosaminyl-di-trans,octa-cis-undecaprenyl diphosphate + 2 GDP + 2 H(+). Its pathway is bacterial outer membrane biogenesis; LPS O-antigen biosynthesis. Its function is as follows. Mannosyltransferase involved in the biosynthesis of the repeat unit of the lipopolysaccharide (LPS) O-antigen region. Catalyzes the transfer of two alpha-(1-&gt;3)-linked mannose residues to the product of the WbdC enzyme during the synthesis of the adapter region. The sequence is that of O-antigen chain mannosyltransferase B from Escherichia coli.